The following is a 555-amino-acid chain: MIWVAVVITMLLFILVAKPTGIYLEKAFQGSKKLDKVFGPFEKLIFKITGVKEYNQTWKQYALSLVLLNGFMIVVVYFIFRLQGVLPLNPAHIEGMEPTLAFNTAISFMADTNLQHYSGENGLSYLSQLIGITFLMFAAPATTLALVMAFIRGLAGKELGNFFIDFTRALTRVFLPIAFMAALVFVAFGVPQTLDGAVTAQTIDGAKQSILRGPVASFVAIKELGNNGGGFFGANSTHPFENPGQMSNILQMMLMMLLPTALPFTYGRMVGNKKQGRILFVSLFMVFLLGFITITTSELNGNPALNGMGIEHVQGSTEGKEVRFGTVFSSLYATVTTAAETGAVNTMHDTLTPIGGLVPLVNMMLNTVYGGVGAGFVNIIMYAIIAVFISGLMVGRTPEFLGKKIEGKEMKLIAVTILFHPLLILGFSALALSTSLGTDAISHSGFHGLTQVVYEYTSSAANNGSGFEGLGDNTPFWNITTGLVMFLGRYFSLITMLAVAASLKEKTVVPETVGTFRTDNSLFGGIFIGTIVIVGALTFFPMLVLGPIAEFLTLK.

10 helical membrane passes run 2 to 22 (IWVA…PTGI), 60 to 80 (QYAL…YFIF), 130 to 150 (IGIT…VMAF), 173 to 193 (VFLP…VPQT), 246 to 266 (MSNI…PFTY), 278 to 298 (ILFV…TTSE), 374 to 394 (AGFV…GLMV), 412 to 432 (LIAV…ALAL), 483 to 503 (LVMF…AASL), and 525 to 545 (GIFI…MLVL).

The protein belongs to the KdpA family. The system is composed of three essential subunits: KdpA, KdpB and KdpC.

The protein resides in the cell membrane. Part of the high-affinity ATP-driven potassium transport (or Kdp) system, which catalyzes the hydrolysis of ATP coupled with the electrogenic transport of potassium into the cytoplasm. This subunit binds the extracellular potassium ions and delivers the ions to the membrane domain of KdpB through an intramembrane tunnel. The chain is Potassium-transporting ATPase potassium-binding subunit from Bacillus cereus (strain ZK / E33L).